The primary structure comprises 427 residues: Enolase (427 aa).

Q163 is a (2R)-2-phosphoglycerate binding site. The Proton donor role is filled by E205. Positions 242, 285, and 312 each coordinate Mg(2+). (2R)-2-phosphoglycerate-binding residues include K337, R366, S367, and K388. The active-site Proton acceptor is the K337.

Belongs to the enolase family. The cofactor is Mg(2+).

The protein resides in the cytoplasm. Its subcellular location is the secreted. It localises to the cell surface. The enzyme catalyses (2R)-2-phosphoglycerate = phosphoenolpyruvate + H2O. It functions in the pathway carbohydrate degradation; glycolysis; pyruvate from D-glyceraldehyde 3-phosphate: step 4/5. Catalyzes the reversible conversion of 2-phosphoglycerate (2-PG) into phosphoenolpyruvate (PEP). It is essential for the degradation of carbohydrates via glycolysis. This Burkholderia vietnamiensis (strain G4 / LMG 22486) (Burkholderia cepacia (strain R1808)) protein is Enolase.